Consider the following 216-residue polypeptide: Probable GTP-binding protein EngB (216 aa).

The region spanning 26 to 200 (EGIEIAFAGR…RAKLDTWFAP (175 aa)) is the EngB-type G domain. GTP is bound by residues 34–41 (GRSNAGKS), 61–65 (GRTQL), 79–82 (DLPG), 146–149 (TKAD), and 179–181 (YSS). Positions 41 and 63 each coordinate Mg(2+).

Belongs to the TRAFAC class TrmE-Era-EngA-EngB-Septin-like GTPase superfamily. EngB GTPase family. Mg(2+) is required as a cofactor.

Functionally, necessary for normal cell division and for the maintenance of normal septation. The chain is Probable GTP-binding protein EngB from Vibrio vulnificus (strain CMCP6).